The following is a 336-amino-acid chain: Large ribosomal subunit protein mL39 (336 aa).

Residues 60–126 (EKIEVKHVGK…TKSCEIKFLT (67 aa)) enclose the TGS domain. Lysine 123 carries the post-translational modification N6-acetyllysine.

This sequence belongs to the mitochondrion-specific ribosomal protein mL39 family. Component of the mitochondrial ribosome large subunit (39S) which comprises a 16S rRNA and about 50 distinct proteins.

The protein resides in the mitochondrion. This is Large ribosomal subunit protein mL39 (Mrpl39) from Mus musculus (Mouse).